The following is a 127-amino-acid chain: UPF0102 protein ERGA_CDS_00540 (127 aa).

It belongs to the UPF0102 family.

The sequence is that of UPF0102 protein ERGA_CDS_00540 from Ehrlichia ruminantium (strain Gardel).